The sequence spans 507 residues: Monocarboxylate transporter 9 (507 aa).

Residues 1-12 are Extracellular-facing; the sequence is MVYRKPPDGGWG. Residues 13–33 form a helical membrane-spanning segment; sequence WVIVIVSFFTQFLCYGSPLAV. Residues 34-52 are Cytoplasmic-facing; sequence GVLYLEWLDAFGEGKGKTA. A helical membrane pass occupies residues 53-73; sequence WVGSLANGIGLLASPVCSICV. Over 74–79 the chain is Extracellular; it reads SSFGAR. The helical transmembrane segment at 80–100 threads the bilayer; the sequence is PVAIFSGFMVAGGLMMSSFAP. The Cytoplasmic portion of the chain corresponds to 101–102; the sequence is NI. The chain crosses the membrane as a helical span at residues 103–123; that stretch reads YFLYLSYGIVVGLGCGLLYNA. At 124–136 the chain is on the extracellular side; it reads TVTITCQYFDKRR. A helical transmembrane segment spans residues 137-157; sequence GLALGLISTGSSVGLFIYAAL. The Cytoplasmic portion of the chain corresponds to 158–163; it reads QRELIE. Residues 164–184 form a helical membrane-spanning segment; that stretch reads LYGLDGCLLIVGALSLNILAC. Topologically, residues 185–302 are extracellular; the sequence is GSLMRPLESS…EETVVLFKNR (118 aa). Residues 303–323 form a helical membrane-spanning segment; the sequence is VFSALFFAILLFDIGGFPPSL. Over 324–340 the chain is Cytoplasmic; sequence LMEDIARSANINEEDYH. A helical transmembrane segment spans residues 341 to 361; the sequence is MPLVSIIGIMTAIGKLILGIL. The Extracellular segment spans residues 362 to 369; it reads ADFKWVNT. Residues 370–390 form a helical membrane-spanning segment; sequence LYLYVLTLLMMGAALLAIPFA. The Cytoplasmic segment spans residues 391–395; sequence RSYFT. A helical transmembrane segment spans residues 396-416; sequence LAVLSGILGFLTGNWSIFPYV. Over 417-430 the chain is Extracellular; the sequence is TTKTVGIEKLTHAY. The chain crosses the membrane as a helical span at residues 431–451; it reads GILMFFAGLGNSLGPPIVGWF. Residues 452–460 lie on the Cytoplasmic side of the membrane; the sequence is YDWTQEYDT. The helical transmembrane segment at 461–481 threads the bilayer; sequence AFYFSGFCVLLGGFLLLLAAL. The Extracellular portion of the chain corresponds to 482–507; that stretch reads PCWNACTDRSSKLPPNTYSYKVASSA.

It belongs to the major facilitator superfamily. Monocarboxylate porter (TC 2.A.1.13) family.

The protein localises to the cell membrane. The enzyme catalyses creatine(in) = creatine(out). It catalyses the reaction (R)-carnitine(in) = (R)-carnitine(out). Functionally, extracellular pH-and Na(+)-sensitive low-affinity creatine transporter. Also functions as a pH-independent carnitine efflux transporter. This is Monocarboxylate transporter 9 (SLC16A9) from Gallus gallus (Chicken).